Consider the following 469-residue polypeptide: Adenosylhomocysteinase (469 aa).

Positions 63, 139, and 164 each coordinate substrate. 165-167 is an NAD(+) binding site; it reads TTT. Substrate contacts are provided by lysine 194 and aspartate 198. NAD(+) is bound by residues asparagine 199, 228–233, glutamate 251, asparagine 300, 321–323, and asparagine 375; these read GYGDVG and IGH.

Belongs to the adenosylhomocysteinase family. NAD(+) serves as cofactor.

The protein localises to the cytoplasm. The enzyme catalyses S-adenosyl-L-homocysteine + H2O = L-homocysteine + adenosine. The protein operates within amino-acid biosynthesis; L-homocysteine biosynthesis; L-homocysteine from S-adenosyl-L-homocysteine: step 1/1. Its function is as follows. May play a key role in the regulation of the intracellular concentration of adenosylhomocysteine. This chain is Adenosylhomocysteinase, found in Pseudomonas aeruginosa (strain LESB58).